A 715-amino-acid polypeptide reads, in one-letter code: ATP-dependent RNA helicase DBP7 (715 aa).

Disordered regions lie at residues 1–82 (MSDD…SKAD) and 94–121 (FTSN…SNAP). Basic and acidic residues-rich tracts occupy residues 20–29 (RADKVTGGRW), 40–73 (GGRE…EKKN), and 101–115 (QTSE…DDKV). Residues 125–154 (DSFEGLGVGSLVVSHLENKMRIQKSTSIQK) carry the Q motif motif. The 195-residue stretch at 160–354 (ILQNADKTDF…KRSLDNYKVI (195 aa)) folds into the Helicase ATP-binding domain. 173-180 (AQTGSGKT) is an ATP binding site. The DEAD box signature appears at 289–292 (DEGD). In terms of domain architecture, Helicase C-terminal spans 400-586 (PLDAGSVAKR…VLIKAFNDID (187 aa)). The interval 668-698 (DRPKAMGMNSSKDANGNERSKPKKENAKNKM) is disordered. The segment covering 682 to 695 (NGNERSKPKKENAK) has biased composition (basic and acidic residues).

This sequence belongs to the DEAD box helicase family. DDX31/DBP7 subfamily.

It is found in the nucleus. The protein localises to the nucleolus. It catalyses the reaction ATP + H2O = ADP + phosphate + H(+). In terms of biological role, ATP-binding RNA helicase involved in the biogenesis of 60S ribosomal subunits and is required for the normal formation of 25S and 5.8S rRNAs. This is ATP-dependent RNA helicase DBP7 (DBP7) from Candida glabrata (strain ATCC 2001 / BCRC 20586 / JCM 3761 / NBRC 0622 / NRRL Y-65 / CBS 138) (Yeast).